Here is a 166-residue protein sequence, read N- to C-terminus: Phospholipase A2 inhibitor (166 aa).

The first 19 residues, 1-19, serve as a signal peptide directing secretion; it reads MRLILLSGLLLLGIFLANG. The 116-residue stretch at 46 to 161 folds into the C-type lectin domain; it reads LKGSFLIVHK…CDDNLLVVCE (116 aa). Cystine bridges form between Cys83–Cys160 and Cys138–Cys152. The N-linked (GlcNAc...) asparagine glycan is linked to Asn122.

The protein belongs to the alpha-type phospholipase A2 inhibitor family. As to quaternary structure, homotrimer; non-covalently linked. Expressed by the liver.

The protein resides in the secreted. This phospholipase A2 inhibitor binds directly phospholipase A2 in the presence or absence of calcium. The protein is Phospholipase A2 inhibitor of Bothrops jararacussu (Jararacussu).